The following is an 82-amino-acid chain: Exodeoxyribonuclease 7 small subunit (82 aa).

Belongs to the XseB family. In terms of assembly, heterooligomer composed of large and small subunits.

The protein resides in the cytoplasm. The enzyme catalyses Exonucleolytic cleavage in either 5'- to 3'- or 3'- to 5'-direction to yield nucleoside 5'-phosphates.. Functionally, bidirectionally degrades single-stranded DNA into large acid-insoluble oligonucleotides, which are then degraded further into small acid-soluble oligonucleotides. In Sodalis glossinidius (strain morsitans), this protein is Exodeoxyribonuclease 7 small subunit.